A 397-amino-acid chain; its full sequence is Acetate kinase (397 aa).

A Mg(2+)-binding site is contributed by Asn7. ATP is bound at residue Lys14. Arg90 is a substrate binding site. Catalysis depends on Asp147, which acts as the Proton donor/acceptor. Residues His207 to Gly211, Asp282 to Arg284, and Gly330 to Asn334 each bind ATP. Glu383 provides a ligand contact to Mg(2+).

Belongs to the acetokinase family. Homodimer. The cofactor is Mg(2+). Requires Mn(2+) as cofactor.

It is found in the cytoplasm. The enzyme catalyses acetate + ATP = acetyl phosphate + ADP. The protein operates within metabolic intermediate biosynthesis; acetyl-CoA biosynthesis; acetyl-CoA from acetate: step 1/2. Catalyzes the formation of acetyl phosphate from acetate and ATP. Can also catalyze the reverse reaction. The polypeptide is Acetate kinase (Clostridium botulinum (strain 657 / Type Ba4)).